The following is a 412-amino-acid chain: Arginine biosynthesis bifunctional protein ArgJ (412 aa).

Thr-155, Lys-181, Thr-192, Glu-279, Asn-407, and Ser-412 together coordinate substrate. The active-site Nucleophile is the Thr-192.

Belongs to the ArgJ family. As to quaternary structure, heterotetramer of two alpha and two beta chains.

Its subcellular location is the cytoplasm. It catalyses the reaction N(2)-acetyl-L-ornithine + L-glutamate = N-acetyl-L-glutamate + L-ornithine. The enzyme catalyses L-glutamate + acetyl-CoA = N-acetyl-L-glutamate + CoA + H(+). It functions in the pathway amino-acid biosynthesis; L-arginine biosynthesis; L-ornithine and N-acetyl-L-glutamate from L-glutamate and N(2)-acetyl-L-ornithine (cyclic): step 1/1. It participates in amino-acid biosynthesis; L-arginine biosynthesis; N(2)-acetyl-L-ornithine from L-glutamate: step 1/4. Its function is as follows. Catalyzes two activities which are involved in the cyclic version of arginine biosynthesis: the synthesis of N-acetylglutamate from glutamate and acetyl-CoA as the acetyl donor, and of ornithine by transacetylation between N(2)-acetylornithine and glutamate. The protein is Arginine biosynthesis bifunctional protein ArgJ of Aromatoleum aromaticum (strain DSM 19018 / LMG 30748 / EbN1) (Azoarcus sp. (strain EbN1)).